A 200-amino-acid chain; its full sequence is Dephospho-CoA kinase (200 aa).

One can recognise a DPCK domain in the interval 4 to 200 (VIGLTGGIGS…QKYIKMSHLY (197 aa)). 12–17 (GSGKTT) serves as a coordination point for ATP.

It belongs to the CoaE family.

It localises to the cytoplasm. The catalysed reaction is 3'-dephospho-CoA + ATP = ADP + CoA + H(+). It functions in the pathway cofactor biosynthesis; coenzyme A biosynthesis; CoA from (R)-pantothenate: step 5/5. In terms of biological role, catalyzes the phosphorylation of the 3'-hydroxyl group of dephosphocoenzyme A to form coenzyme A. The protein is Dephospho-CoA kinase of Photobacterium profundum (strain SS9).